The sequence spans 358 residues: tRNA-specific 2-thiouridylase MnmA (358 aa).

Residues 6 to 13 (LVSGGVDS) and isoleucine 32 contribute to the ATP site. The segment at 93 to 95 (NPD) is interaction with target base in tRNA. Cysteine 98 functions as the Nucleophile in the catalytic mechanism. Cysteine 98 and cysteine 193 are oxidised to a cystine. Glycine 121 is a binding site for ATP. The tract at residues 143–145 (KDQ) is interaction with tRNA. Cysteine 193 serves as the catalytic Cysteine persulfide intermediate.

The protein belongs to the MnmA/TRMU family.

Its subcellular location is the cytoplasm. It carries out the reaction S-sulfanyl-L-cysteinyl-[protein] + uridine(34) in tRNA + AH2 + ATP = 2-thiouridine(34) in tRNA + L-cysteinyl-[protein] + A + AMP + diphosphate + H(+). Functionally, catalyzes the 2-thiolation of uridine at the wobble position (U34) of tRNA, leading to the formation of s(2)U34. The polypeptide is tRNA-specific 2-thiouridylase MnmA (Parabacteroides distasonis (strain ATCC 8503 / DSM 20701 / CIP 104284 / JCM 5825 / NCTC 11152)).